A 534-amino-acid polypeptide reads, in one-letter code: uncharacterized protein (534 aa).

3 disordered regions span residues 1 to 150 (MSDS…DIPP), 252 to 284 (RRFR…NGQP), and 383 to 434 (WKSQ…PSLP). Residues 8–67 (SQREDNYSRDRRSRFTEDSYSRRDSQRSGNEAPRESRYYRKEEHLQERSRSRSPARDSRW) show a composition bias toward basic and acidic residues. The segment covering 102–113 (SLQSTKATSSRT) has biased composition (polar residues). A compositionally biased stretch (pro residues) spans 130–141 (PSAPAPPLPPSS). Basic and acidic residues predominate over residues 252-262 (RRFRRREDNER). Residues 263–272 (NNSNSPRNFS) show a composition bias toward low complexity. Polar residues predominate over residues 393 to 408 (NQGNRAYNPPNRNQAF).

This is an uncharacterized protein from Schizosaccharomyces pombe (strain 972 / ATCC 24843) (Fission yeast).